We begin with the raw amino-acid sequence, 380 residues long: Cytochrome b (380 aa).

The next 4 helical transmembrane spans lie at 34–54 (FGSL…LLAM), 78–99 (WLIR…FLHI), 114–134 (WNTG…GYVL), and 179–199 (FFAL…IHLT). Heme b is bound by residues His-84 and His-98. The heme b site is built by His-183 and His-197. A ubiquinone is bound at residue His-202. 4 helical membrane passes run 227–247 (FKDI…ALFS), 289–309 (LGGV…PFLH), 321–341 (LSQT…WIGS), and 348–368 (FIII…ILFP).

The protein belongs to the cytochrome b family. The cytochrome bc1 complex contains 11 subunits: 3 respiratory subunits (MT-CYB, CYC1 and UQCRFS1), 2 core proteins (UQCRC1 and UQCRC2) and 6 low-molecular weight proteins (UQCRH/QCR6, UQCRB/QCR7, UQCRQ/QCR8, UQCR10/QCR9, UQCR11/QCR10 and a cleavage product of UQCRFS1). This cytochrome bc1 complex then forms a dimer. Requires heme b as cofactor.

The protein resides in the mitochondrion inner membrane. Component of the ubiquinol-cytochrome c reductase complex (complex III or cytochrome b-c1 complex) that is part of the mitochondrial respiratory chain. The b-c1 complex mediates electron transfer from ubiquinol to cytochrome c. Contributes to the generation of a proton gradient across the mitochondrial membrane that is then used for ATP synthesis. In Gallus gallus (Chicken), this protein is Cytochrome b (MT-CYB).